The sequence spans 360 residues: D-alanine--D-alanine ligase (360 aa).

An ATP-grasp domain is found at 146–352 (KICAEHAGLH…FSQLIDRLLQ (207 aa)). 179–234 (LEEFTLPFFVKPASQGSSIGITKVHRPEELAAALEKAFMVDTKVLIEKTIEGREIE) is a binding site for ATP. The Mg(2+) site is built by Asp-305, Glu-319, and Asn-321.

It belongs to the D-alanine--D-alanine ligase family. The cofactor is Mg(2+). Mn(2+) serves as cofactor.

The protein resides in the cytoplasm. The catalysed reaction is 2 D-alanine + ATP = D-alanyl-D-alanine + ADP + phosphate + H(+). It functions in the pathway cell wall biogenesis; peptidoglycan biosynthesis. Cell wall formation. This Prosthecochloris aestuarii (strain DSM 271 / SK 413) protein is D-alanine--D-alanine ligase.